Here is a 356-residue protein sequence, read N- to C-terminus: Histidine biosynthesis bifunctional protein HisB (356 aa).

Positions 1–166 (MSKKVLFIDR…AICNYLTSLN (166 aa)) are histidinol-phosphatase. The active-site Nucleophile is Asp-9. Residues Asp-9 and Asp-11 each coordinate Mg(2+). Asp-11 functions as the Proton donor in the catalytic mechanism. Zn(2+) contacts are provided by Cys-93, His-95, Cys-101, and Cys-103. Position 130 (Asp-130) interacts with Mg(2+). The tract at residues 167–356 (RYAHVKRITK…VLPSSKGVLS (190 aa)) is imidazoleglycerol-phosphate dehydratase.

This sequence in the N-terminal section; belongs to the histidinol-phosphatase family. It in the C-terminal section; belongs to the imidazoleglycerol-phosphate dehydratase family. Requires Mg(2+) as cofactor. Zn(2+) serves as cofactor.

It localises to the cytoplasm. The catalysed reaction is D-erythro-1-(imidazol-4-yl)glycerol 3-phosphate = 3-(imidazol-4-yl)-2-oxopropyl phosphate + H2O. It catalyses the reaction L-histidinol phosphate + H2O = L-histidinol + phosphate. The protein operates within amino-acid biosynthesis; L-histidine biosynthesis; L-histidine from 5-phospho-alpha-D-ribose 1-diphosphate: step 6/9. It participates in amino-acid biosynthesis; L-histidine biosynthesis; L-histidine from 5-phospho-alpha-D-ribose 1-diphosphate: step 8/9. The polypeptide is Histidine biosynthesis bifunctional protein HisB (Baumannia cicadellinicola subsp. Homalodisca coagulata).